The primary structure comprises 180 residues: MFHATTILAYKGNKGSIIGGDGQVSFGNTVLKGNAVKIRKLLGGKILAGFAGSTADAFNLFDMFERILESTKGDLLKAVIEFSKEWRKDKVLRKLEAMMLVLDREHIFLLSGTGDVVEPEDGKIAAIGSGGNYALAAARALDKFADINEEELVKESLKIAGEICIYTNTNIKTYALWDEK.

Threonine 5 is an active-site residue. Positions 161, 164, and 167 each coordinate Na(+).

Belongs to the peptidase T1B family. HslV subfamily. In terms of assembly, a double ring-shaped homohexamer of HslV is capped on each side by a ring-shaped HslU homohexamer. The assembly of the HslU/HslV complex is dependent on binding of ATP.

The protein resides in the cytoplasm. It carries out the reaction ATP-dependent cleavage of peptide bonds with broad specificity.. With respect to regulation, allosterically activated by HslU binding. Protease subunit of a proteasome-like degradation complex believed to be a general protein degrading machinery. The chain is ATP-dependent protease subunit HslV from Campylobacter fetus subsp. fetus (strain 82-40).